The following is a 290-amino-acid chain: Arylamine N-acetyltransferase 1 (290 aa).

Methionine 1 carries the post-translational modification N-acetylmethionine. The active-site Acyl-thioester intermediate is cysteine 68. CoA-binding residues include threonine 103 and glycine 104. Residue 106 to 107 (IH) participates in substrate binding. Residues histidine 107 and aspartate 122 contribute to the active site. CoA is bound by residues tyrosine 208 and serine 214.

This sequence belongs to the arylamine N-acetyltransferase family.

The protein localises to the cytoplasm. The catalysed reaction is an arylamine + acetyl-CoA = an N-acetylarylamine + CoA. The protein is Arylamine N-acetyltransferase 1 (NAT1) of Oryctolagus cuniculus (Rabbit).